We begin with the raw amino-acid sequence, 155 residues long: Interleukin-2 (155 aa).

The signal sequence occupies residues 1–20 (MYKMQLLSCIALMLVLVANS). An O-linked (GalNAc...) threonine glycan is attached at Thr24. Residues Cys79 and Cys127 are joined by a disulfide bond. Residue Asn112 is glycosylated (N-linked (GlcNAc...) asparagine).

The protein belongs to the IL-2 family.

It is found in the secreted. In terms of biological role, cytokine produced by activated CD4-positive helper T-cells and to a lesser extend activated CD8-positive T-cells and natural killer (NK) cells that plays pivotal roles in the immune response and tolerance. Binds to a receptor complex composed of either the high-affinity trimeric IL-2R (IL2RA/CD25, IL2RB/CD122 and IL2RG/CD132) or the low-affinity dimeric IL-2R (IL2RB and IL2RG). Interaction with the receptor leads to oligomerization and conformation changes in the IL-2R subunits resulting in downstream signaling starting with phosphorylation of JAK1 and JAK3. In turn, JAK1 and JAK3 phosphorylate the receptor to form a docking site leading to the phosphorylation of several substrates including STAT5. This process leads to activation of several pathways including STAT, phosphoinositide-3-kinase/PI3K and mitogen-activated protein kinase/MAPK pathways. Functions as a T-cell growth factor and can increase NK-cell cytolytic activity as well. Promotes strong proliferation of activated B-cells and subsequently immunoglobulin production. Plays a pivotal role in regulating the adaptive immune system by controlling the survival and proliferation of regulatory T-cells, which are required for the maintenance of immune tolerance. Moreover, participates in the differentiation and homeostasis of effector T-cell subsets, including Th1, Th2, Th17 as well as memory CD8-positive T-cells. The sequence is that of Interleukin-2 (IL2) from Vulpes vulpes (Red fox).